The following is a 496-amino-acid chain: E3 ubiquitin-protein ligase CBL-C (496 aa).

The segment at 7 to 144 (PRGWQRGEPR…SALFPAGKYC (138 aa)) is 4H. Residues 7–320 (PRGWQRGEPR…GKKHNPDLTE (314 aa)) enclose the Cbl-PTB domain. Residues 145–217 (GHLYQLTKGS…FEFDVFTRLF (73 aa)) are EF-hand-like. Ca(2+)-binding residues include Asp-198, Thr-200, Asn-202, and Glu-209. Residues 218–320 (QPWPTLLRNW…GKKHNPDLTE (103 aa)) form an SH2-like region. Arg-263 is a 4-O-phospho-L-tyrosine binding site. A linker region spans residues 321 to 349 (LCRVEPYQRIQVSEEQLLLYQAMNSTFQL). Tyr-340 bears the Phosphotyrosine; by SRC mark. Residues 350-389 (CKICAERDKDVRIEPCGHLLCSCCLAAWQDSDSQTCPFCR) form an RING-type zinc finger. The interaction with RET stretch occupies residues 350 to 494 (CKICAERDKD…RPRAREEATE (145 aa)). Residues 432 to 453 (PVIPSAPSLLPEDQFPQGPQDK) are disordered.

As to quaternary structure, interacts with Ubiquitin-conjugating enzyme E2 UBE2D2 and UBE2D3. Isoform 1 interacts with EGFR (tyrosine phosphorylated). Interacts with the SH3 domain proteins LYN and CRK. Interacts (via RING-type zinc finger) with TGFB1I1 (via LIM zinc-binding domain 2); the interaction is direct and enhances the E3 activity. Interacts directly with RET (inactive) and CD2AP; dissociates from RET upon RET activation by GDNF which also increases the interaction with CD2AP suggesting dissociation as CBLC:CD2AP complex. Interacts with SRC; the interaction is enhanced when SRC is phosphorylated at 'Tyr-419'. Phosphorylated on tyrosines by EGFR. In terms of processing, phosphorylated on multiple tyrosine residues by SRC. Isoform 1, but not isoform 2, is phosphorylated on tyrosines by EGFR. Post-translationally, autoubiquitinated, when phosphorylated at Tyr-340. Widely expressed in tissues, where the expression is restricted to epithelial cells (at protein level).

It carries out the reaction S-ubiquitinyl-[E2 ubiquitin-conjugating enzyme]-L-cysteine + [acceptor protein]-L-lysine = [E2 ubiquitin-conjugating enzyme]-L-cysteine + N(6)-ubiquitinyl-[acceptor protein]-L-lysine.. With respect to regulation, phosphorylation at Tyr-340 is necessary and sufficient for the activation of E3 activity. In terms of biological role, acts as an E3 ubiquitin-protein ligase, which accepts ubiquitin from specific E2 ubiquitin-conjugating enzymes, and then transfers it to substrates promoting their degradation by the proteasome. Functionally coupled with the E2 ubiquitin-protein ligases UB2D1, UB2D2 and UB2D3. Regulator of EGFR mediated signal transduction; upon EGF activation, ubiquitinates EGFR. Isoform 1, but not isoform 2, inhibits EGF stimulated MAPK1 activation. Promotes ubiquitination of SRC phosphorylated at 'Tyr-424', has the highest ubiquitin ligase activity among CBL family proteins. In collaboration with CD2AP may act as regulatory checkpoint for Ret signaling by modulating the rate of RET degradation after ligand activation; CD2AP converts it from an inhibitor to a promoter of RET degradation; the function limits the potency of GDNF on neuronal survival. This chain is E3 ubiquitin-protein ligase CBL-C (Cblc), found in Mus musculus (Mouse).